We begin with the raw amino-acid sequence, 154 residues long: Deoxyuridine 5'-triphosphate nucleotidohydrolase (154 aa).

Residues 70 to 72, Asn-83, 87 to 89, and Met-97 each bind substrate; these read RSG and LID.

It belongs to the dUTPase family. Requires Mg(2+) as cofactor.

It catalyses the reaction dUTP + H2O = dUMP + diphosphate + H(+). It participates in pyrimidine metabolism; dUMP biosynthesis; dUMP from dCTP (dUTP route): step 2/2. Its function is as follows. This enzyme is involved in nucleotide metabolism: it produces dUMP, the immediate precursor of thymidine nucleotides and it decreases the intracellular concentration of dUTP so that uracil cannot be incorporated into DNA. This Buchnera aphidicola subsp. Acyrthosiphon pisum (strain 5A) protein is Deoxyuridine 5'-triphosphate nucleotidohydrolase.